A 71-amino-acid chain; its full sequence is NAD(P)H-quinone oxidoreductase subunit O (71 aa).

Belongs to the complex I NdhO subunit family. In terms of assembly, NDH-1 can be composed of about 15 different subunits; different subcomplexes with different compositions have been identified which probably have different functions.

It is found in the cellular thylakoid membrane. The enzyme catalyses a plastoquinone + NADH + (n+1) H(+)(in) = a plastoquinol + NAD(+) + n H(+)(out). It catalyses the reaction a plastoquinone + NADPH + (n+1) H(+)(in) = a plastoquinol + NADP(+) + n H(+)(out). In terms of biological role, NDH-1 shuttles electrons from an unknown electron donor, via FMN and iron-sulfur (Fe-S) centers, to quinones in the respiratory and/or the photosynthetic chain. The immediate electron acceptor for the enzyme in this species is believed to be plastoquinone. Couples the redox reaction to proton translocation, and thus conserves the redox energy in a proton gradient. Cyanobacterial NDH-1 also plays a role in inorganic carbon-concentration. The protein is NAD(P)H-quinone oxidoreductase subunit O of Nostoc punctiforme (strain ATCC 29133 / PCC 73102).